A 789-amino-acid chain; its full sequence is Tax1-binding protein 1 (789 aa).

Phosphoserine occurs at positions 124, 138, and 225. A coiled-coil region spans residues threonine 144–glutamate 599. Residues glutamate 320–aspartate 420 are oligomerization. Polar residues predominate over residues threonine 481 to threonine 502. The interval threonine 481–serine 508 is disordered. Phosphoserine; by IKKA is present on serine 593. A Phosphoserine modification is found at serine 609. Residues tyrosine 639 to proline 660 are disordered. Serine 666 is modified (phosphoserine; by IKKA). The segment at proline 678–arginine 712 is disordered. UBZ1-type zinc fingers lie at residues histidine 727–histidine 753 and tryptophan 754–histidine 780. Residues cysteine 730, cysteine 733, histidine 749, histidine 753, cysteine 757, cysteine 760, histidine 776, and histidine 780 each contribute to the Zn(2+) site.

In terms of assembly, homooligomer. Interacts with TNFAIP3. Interacts with STARD13. Interacts with MYO6. Interacts with TOM1; the interaction is indirect and is mediated by MYO6, which acts as a bridge between TOM1 and TAX1BP1. Interacts with MAVS; this interaction induces MAVS polyubiquitination. Interacts with TNIP1. Interacts with TRAF6; this interaction mediates deubiquitination of TRAF6 and inhibition of NF-kappa-B activation. Interacts with RIPK1; this interaction negatively regulates RIPK1 ubiquitination. Interacts with NBR1. Interacts with TBK1. Interacts with RB1CC1. Interacts with SQSTM1. Interacts with AZI2. Interacts with TICAM1 and TRIM32; these interactions target TICAM1 to TAX1BP1-mediated selective autophagic degradation. (Microbial infection) Interacts with the HTLV-1 protein Tax. As to quaternary structure, (Microbial infection) Interacts with Respiratory syncytial virus protein N; this interaction may promote viral growth by inhibiting the innate immune response. In terms of assembly, (Microbial infection) Interacts with Lassa virus protein Z. (Microbial infection) Interacts with Mopeia virus protein Z. Phosphorylated in the C-terminal region by CHUK/IKKA leading to NF-kappa-B signaling down-regulation. As to expression, expressed in all tissues tested.

Its subcellular location is the cytoplasm. The protein localises to the mitochondrion. It is found in the preautophagosomal structure. It localises to the cytoplasmic vesicle. The protein resides in the autophagosome. In terms of biological role, ubiquitin-binding adapter that participates in inflammatory, antiviral and innate immune processes as well as selective autophagy regulation. Plays a key role in the negative regulation of NF-kappa-B and IRF3 signalings by acting as an adapter for the ubiquitin-editing enzyme A20/TNFAIP3 to bind and inactivate its substrates. Disrupts the interactions between the E3 ubiquitin ligase TRAF3 and TBK1/IKBKE to attenuate 'Lys63'-linked polyubiquitination of TBK1 and thereby IFN-beta production. Also recruits A20/TNFAIP3 to ubiquitinated signaling proteins TRAF6 and RIPK1, leading to their deubiquitination and disruption of IL-1 and TNF-induced NF-kappa-B signaling pathways. Inhibits virus-induced apoptosis by inducing the 'Lys-48'-linked polyubiquitination and degradation of MAVS via recruitment of the E3 ligase ITCH, thereby attenuating MAVS-mediated apoptosis signaling. As a macroautophagy/autophagy receptor, facilitates the xenophagic clearance of pathogenic bacteria such as Salmonella typhimurium and Mycobacterium tuberculosis. Upon NBR1 recruitment to the SQSTM1-ubiquitin condensates, acts as the major recruiter of RB1CC1 to these ubiquitin condensates to promote their autophagic degradation. Mediates the autophagic degradation of other substrates including TICAM1. This is Tax1-binding protein 1 (TAX1BP1) from Homo sapiens (Human).